The following is a 342-amino-acid chain: UHRF1-like protein (342 aa).

The segment at 41 to 149 is disordered; sequence SEATTLATPS…SHPGSEEEDI (109 aa). Positions 42–59 are enriched in polar residues; the sequence is EATTLATPSNLKTAGNQR. The segment covering 74 to 90 has biased composition (basic and acidic residues); sequence NRSDSPRKRPTKDREDL. A compositionally biased stretch (polar residues) spans 115-141; sequence TREQVTFNSDRDTPNTPSRQIKSTHSH. The region spanning 168-322 is the YDG domain; it reads GHIPGIGVGK…LMVCRYAFKR (155 aa). A DNA-binding site is contributed by aspartate 218. Positions 236 to 257 are disordered; it reads KGTKQNPKNLRTAPQTSHQSFD. Residues 238–257 are compositionally biased toward polar residues; the sequence is TKQNPKNLRTAPQTSHQSFD.

The protein resides in the nucleus. Its function is as follows. Involved in the maintenance of DNA methylation. Binds hemimethylated DNA. The chain is UHRF1-like protein from Cryptococcus neoformans var. grubii serotype A (strain H99 / ATCC 208821 / CBS 10515 / FGSC 9487) (Filobasidiella neoformans var. grubii).